A 312-amino-acid polypeptide reads, in one-letter code: Pectin lyase (312 aa).

The active site involves Arg-201. The tract at residues 254–274 (GSGTFTDTNSVPPITNQKSPK) is disordered. Polar residues predominate over residues 256-274 (GTFTDTNSVPPITNQKSPK).

Belongs to the polysaccharide lyase 1 family.

The catalysed reaction is Eliminative cleavage of (1-&gt;4)-alpha-D-galacturonan methyl ester to give oligosaccharides with 4-deoxy-6-O-methyl-alpha-D-galact-4-enuronosyl groups at their non-reducing ends.. This is Pectin lyase (pnl) from Pseudomonas marginalis (Pseudomonas panacis).